The sequence spans 157 residues: uncharacterized protein (157 aa).

The N-acetyltransferase domain maps to L9–E154.

This is an uncharacterized protein from Bacillus cereus (strain B4264).